Here is a 240-residue protein sequence, read N- to C-terminus: MEMKQISETTLKITISMEDLEERGMELKDFLIPQEKTEEFFYTVMDELDLPENFKDSGMLSFRVTPRNDRIDVFVTKSEINKNLNLEDLSDFDDISKMSPEDFFNTLEETMREKGDAAALDKLAEIEKREEEKTQQEKGETKEKRDYVHFVLDFPNIQQVINFAKTVDYDVEASELFKESDAYHMTVLLNLEDKPDYYADLMFARMLEHAGRGTKTRAYLLEHGVQLIKADALQELQMIG.

This sequence belongs to the MecA family. Homodimer.

Enables the recognition and targeting of unfolded and aggregated proteins to the ClpC protease or to other proteins involved in proteolysis. The polypeptide is Adapter protein MecA (Streptococcus mutans serotype c (strain ATCC 700610 / UA159)).